Here is a 1023-residue protein sequence, read N- to C-terminus: Exportin-T (1023 aa).

Belongs to the exportin family.

It localises to the nucleus. The protein resides in the cytoplasm. In terms of biological role, tRNA nucleus export receptor which facilitates tRNA translocation across the nuclear pore complex. Involved in pre-tRNA splicing, probably by affecting the interaction of pre-tRNA with splicing endonuclease. This Sclerotinia sclerotiorum (strain ATCC 18683 / 1980 / Ss-1) (White mold) protein is Exportin-T (los1).